A 187-amino-acid polypeptide reads, in one-letter code: dTTP/UTP pyrophosphatase (187 aa).

D68 (proton acceptor) is an active-site residue.

It belongs to the Maf family. YhdE subfamily. Requires a divalent metal cation as cofactor.

The protein localises to the cytoplasm. It catalyses the reaction dTTP + H2O = dTMP + diphosphate + H(+). It carries out the reaction UTP + H2O = UMP + diphosphate + H(+). Nucleoside triphosphate pyrophosphatase that hydrolyzes dTTP and UTP. May have a dual role in cell division arrest and in preventing the incorporation of modified nucleotides into cellular nucleic acids. In Thermus thermophilus (strain ATCC BAA-163 / DSM 7039 / HB27), this protein is dTTP/UTP pyrophosphatase.